Consider the following 520-residue polypeptide: Ribonuclease Y (520 aa).

The helical transmembrane segment at 1 to 21 (MDIITIIIAVIAGIGGGFGIS) threads the bilayer. Residues 210-276 (CVSVFNIESD…RLALHKLVTD (67 aa)) enclose the KH domain. An HD domain is found at 336-429 (LLQHSREVSK…VQVCDAISGA (94 aa)).

The protein belongs to the RNase Y family.

Its subcellular location is the cell membrane. Endoribonuclease that initiates mRNA decay. The protein is Ribonuclease Y of Flavobacterium psychrophilum (strain ATCC 49511 / DSM 21280 / CIP 103535 / JIP02/86).